Reading from the N-terminus, the 263-residue chain is NADH dehydrogenase [ubiquinone] iron-sulfur protein 3, mitochondrial (263 aa).

The N-terminal 35 residues, 1 to 35, are a transit peptide targeting the mitochondrion; sequence MVAAVARLWWRGLLGASALTRGAGRPSVLLLPVRR.

Belongs to the complex I 30 kDa subunit family. Core subunit of respiratory chain NADH dehydrogenase (Complex I) which is composed of 45 different subunits. Interacts with NDUFAF3. Interacts with RAB5IF. Found in subcomplexes containing subunits NDUFS2, MT-ND1 and NDUFA13.

It localises to the mitochondrion inner membrane. The enzyme catalyses a ubiquinone + NADH + 5 H(+)(in) = a ubiquinol + NAD(+) + 4 H(+)(out). In terms of biological role, core subunit of the mitochondrial membrane respiratory chain NADH dehydrogenase (Complex I) which catalyzes electron transfer from NADH through the respiratory chain, using ubiquinone as an electron acceptor. Essential for the catalytic activity and assembly of complex I. The chain is NADH dehydrogenase [ubiquinone] iron-sulfur protein 3, mitochondrial (NDUFS3) from Pongo pygmaeus (Bornean orangutan).